A 189-amino-acid chain; its full sequence is Glycerol-3-phosphate acyltransferase (189 aa).

The next 4 membrane-spanning stretches (helical) occupy residues 1-21 (MFWLLALLAYLLGSLSFAIVL), 77-97 (LQEQAWVGVCAVLGHLFPVYF), 111-131 (MLMGLYFPAALLAIAAWLLTF), and 151-171 (LLAWREPAALLPISVLTVMIV).

The protein belongs to the PlsY family. Probably interacts with PlsX.

It localises to the cell inner membrane. The enzyme catalyses an acyl phosphate + sn-glycerol 3-phosphate = a 1-acyl-sn-glycero-3-phosphate + phosphate. The protein operates within lipid metabolism; phospholipid metabolism. Its function is as follows. Catalyzes the transfer of an acyl group from acyl-phosphate (acyl-PO(4)) to glycerol-3-phosphate (G3P) to form lysophosphatidic acid (LPA). This enzyme utilizes acyl-phosphate as fatty acyl donor, but not acyl-CoA or acyl-ACP. The polypeptide is Glycerol-3-phosphate acyltransferase (Pseudomonas putida (strain W619)).